Here is a 198-residue protein sequence, read N- to C-terminus: Endonuclease V (198 aa).

Residues Asp-38 and Asp-101 each contribute to the Mg(2+) site.

This sequence belongs to the endonuclease V family. It depends on Mg(2+) as a cofactor.

Its subcellular location is the cytoplasm. It carries out the reaction Endonucleolytic cleavage at apurinic or apyrimidinic sites to products with a 5'-phosphate.. DNA repair enzyme involved in the repair of deaminated bases. Selectively cleaves double-stranded DNA at the second phosphodiester bond 3' to a deoxyinosine leaving behind the intact lesion on the nicked DNA. The sequence is that of Endonuclease V from Saccharolobus islandicus (strain M.14.25 / Kamchatka #1) (Sulfolobus islandicus).